Reading from the N-terminus, the 270-residue chain is Protein MGF 110-1L (270 aa).

Residues 1–26 (MLGLQIFTLLSIPTLLYTYEIEPLER) form the signal peptide. The Extracellular portion of the chain corresponds to 27-117 (TSTPPEKEFG…HERHEADIRK (91 aa)). The A repeat unit spans residues 27-146 (TSTPPEKEFG…YIRKRSLQTV (120 aa)). N-linked (GlcNAc...) asparagine; by host glycosylation is present at N75. A helical membrane pass occupies residues 118 to 138 (WQKLLTYGFYLAGCILAVNYI). The Cytoplasmic portion of the chain corresponds to 139–145 (RKRSLQT). Residues 146–166 (VMYLLVFLVISFLLSQLMLYG) traverse the membrane as a helical segment. The stretch at 147 to 270 (MYLLVFLVIS…DNLMKKQDIM (124 aa)) is one B repeat. Over 167–270 (ELEDKKHKIG…DNLMKKQDIM (104 aa)) the chain is Extracellular.

The protein belongs to the asfivirus MGF 110 family.

The protein localises to the membrane. Its function is as follows. Plays a role in virus cell tropism, and may be required for efficient virus replication in macrophages. The polypeptide is Protein MGF 110-1L (African swine fever virus (isolate Pig/Portugal/OURT88/1988) (ASFV)).